We begin with the raw amino-acid sequence, 123 residues long: Small ribosomal subunit protein uS12 (123 aa).

Residues 1–27 (MPTIQQLIRKPRQPKIKRSKSMHLQEC) form a disordered region. Positions 9 to 21 (RKPRQPKIKRSKS) are enriched in basic residues. Aspartate 89 is subject to 3-methylthioaspartic acid.

Belongs to the universal ribosomal protein uS12 family. In terms of assembly, part of the 30S ribosomal subunit. Contacts proteins S8 and S17. May interact with IF1 in the 30S initiation complex.

In terms of biological role, with S4 and S5 plays an important role in translational accuracy. Its function is as follows. Interacts with and stabilizes bases of the 16S rRNA that are involved in tRNA selection in the A site and with the mRNA backbone. Located at the interface of the 30S and 50S subunits, it traverses the body of the 30S subunit contacting proteins on the other side and probably holding the rRNA structure together. The combined cluster of proteins S8, S12 and S17 appears to hold together the shoulder and platform of the 30S subunit. The sequence is that of Small ribosomal subunit protein uS12 from Roseobacter denitrificans (strain ATCC 33942 / OCh 114) (Erythrobacter sp. (strain OCh 114)).